Reading from the N-terminus, the 482-residue chain is UDP-N-acetylmuramate--L-alanine ligase (482 aa).

Position 123–129 (123–129 (GTHGKTT)) interacts with ATP.

The protein belongs to the MurCDEF family.

It localises to the cytoplasm. It carries out the reaction UDP-N-acetyl-alpha-D-muramate + L-alanine + ATP = UDP-N-acetyl-alpha-D-muramoyl-L-alanine + ADP + phosphate + H(+). It participates in cell wall biogenesis; peptidoglycan biosynthesis. Functionally, cell wall formation. This is UDP-N-acetylmuramate--L-alanine ligase from Pseudomonas entomophila (strain L48).